Here is a 623-residue protein sequence, read N- to C-terminus: Kelch repeat and BTB domain-containing protein 2 (623 aa).

Residues 31–98 enclose the BTB domain; it reads TDIVLIVEGT…AYTGNLAMND (68 aa). One can recognise a BACK domain in the interval 133–229; the sequence is CVRLLSFADL…IRIDALSEVT (97 aa). Position 300 is a phosphoserine (S300). Kelch repeat units follow at residues 317–380, 381–429, 431–469, 470–529, and 535–581; these read DIYI…CCEG, YIYA…VVHD, IYVM…AFGD, KIFY…RAVV, and CVFM…DFRC.

In terms of assembly, component of the BCR(KBTBD2) E3 ubiquitin ligase complex, at least composed of CUL3, KBTBD2 and RBX1. Interacts (via the BTB domain) with CUL3.

The protein operates within protein modification; protein ubiquitination. Its function is as follows. Substrate-specific adapter of a BCR (BTB-CUL3-RBX1) E3 ubiquitin ligase complex that acts as a regulator of the insulin signaling pathway, modulating insulin sensitivity by limiting PIK3R1/p85alpha abundance in adipocytes. Targets PIK3R1, the regulatory subunit of phosphatidylinositol 3-kinase (PI3K), for 'Lys-48'-linked polyubiquitination and proteasome-mediated degradation. In Homo sapiens (Human), this protein is Kelch repeat and BTB domain-containing protein 2.